The following is a 92-amino-acid chain: Small ribosomal subunit protein uS19c (92 aa).

This sequence belongs to the universal ribosomal protein uS19 family.

The protein resides in the plastid. It is found in the chloroplast. Its function is as follows. Protein S19 forms a complex with S13 that binds strongly to the 16S ribosomal RNA. This is Small ribosomal subunit protein uS19c from Ostreococcus tauri.